A 125-amino-acid chain; its full sequence is Holo-[acyl-carrier-protein] synthase (125 aa).

Asp8 and Glu57 together coordinate Mg(2+).

It belongs to the P-Pant transferase superfamily. AcpS family. Mg(2+) serves as cofactor.

The protein localises to the cytoplasm. It carries out the reaction apo-[ACP] + CoA = holo-[ACP] + adenosine 3',5'-bisphosphate + H(+). Its function is as follows. Transfers the 4'-phosphopantetheine moiety from coenzyme A to a Ser of acyl-carrier-protein. The polypeptide is Holo-[acyl-carrier-protein] synthase (Neisseria gonorrhoeae (strain ATCC 700825 / FA 1090)).